A 409-amino-acid polypeptide reads, in one-letter code: Coagulation factor IX (409 aa).

Y1, N2, E7, E8, E16, E18, E21, E22, E27, E28, and E31 together coordinate Ca(2+). The region spanning 1–47 (YNSGKLEESFVRGNLERECIEEKCSFEEAREVFENTEKTNEFWKQYV) is the Gla domain. E7, E8, E16, E18, E21, E22, E27, E28, E31, E34, E37, and E41 each carry 4-carboxyglutamate. A Mg(2+)-binding site is contributed by E16. A disulfide bridge connects residues C19 and C24. E21 lines the Mg(2+) pocket. Mg(2+) is bound at residue E27. E31 provides a ligand contact to Mg(2+). E37, E41, D48, G49, and Q51 together coordinate Ca(2+). The Mg(2+) site is built by E37 and E41. One can recognise an EGF-like 1; calcium-binding domain in the interval 48 to 84 (DGDQCEPNPCLNGGLCKDDINSYECWCQVGFEGKNCE). Disulfide bonds link C52–C63, C57–C72, C74–C83, C89–C100, C96–C110, C112–C125, C133–C291, C208–C224, C338–C352, and C363–C391. Residues D65 and D66 each contribute to the Ca(2+) site. D65 bears the (3R)-3-hydroxyaspartate mark. S69 bears the Phosphoserine mark. Residues 85–126 (LDATCNIKNGRCKQFCKTGADSKVLCSCTTGYRLAPDQKSCK) enclose the EGF-like 2 domain. A propeptide spans 148-182 (AEIIFSNMDYENSTEVEPILDSLTESNQSSDDFIR) (activation peptide). A Sulfotyrosine modification is found at Y157. S160 carries the post-translational modification Phosphoserine. Position 161 is a phosphothreonine; alternate (T161). T161 carries an O-linked (GalNAc...) threonine; alternate glycan. O-linked (GalNAc...) threonine glycosylation occurs at T171. N174 is a glycosylation site (N-linked (GlcNAc...) asparagine). Positions 183–409 (IVGGENAKPG…YTKVSRYVNW (227 aa)) constitute a Peptidase S1 domain. The active-site Charge relay system is H223. 5 residues coordinate Ca(2+): E237, N239, E242, E244, and E247. N262 carries N-linked (GlcNAc...) asparagine glycosylation. D271 (charge relay system) is an active-site residue. S367 (charge relay system) is an active-site residue.

Belongs to the peptidase S1 family. Heterodimer of a light chain and a heavy chain; disulfide-linked. Interacts (inactive and activated) with F11 (activated) in calcium-dependent manner. Interacts with SERPINC1. Post-translationally, activated by factor XIa, which excises the activation peptide. The propeptide can also be removed by snake venom protease. Activated by coagulation factor VIIa-tissue factor (F7-F3) complex in calcium-dependent manner. The iron and 2-oxoglutarate dependent 3-hydroxylation of aspartate and asparagine is (R) stereospecific within EGF domains.

It is found in the secreted. The catalysed reaction is Selective cleavage of Arg-|-Ile bond in factor X to form factor Xa.. In terms of biological role, factor IX is a vitamin K-dependent plasma protein that participates in the intrinsic pathway of blood coagulation by converting factor X to its active form in the presence of Ca(2+) ions, phospholipids, and factor VIIIa. This Sus scrofa (Pig) protein is Coagulation factor IX (F9).